A 176-amino-acid chain; its full sequence is Trypsin inhibitor 1B (176 aa).

Cystine bridges form between Cys39-Cys83 and Cys132-Cys143.

It belongs to the protease inhibitor I3 (leguminous Kunitz-type inhibitor) family.

In terms of biological role, inhibits trypsin stoichiometrically. The protein is Trypsin inhibitor 1B of Erythrina variegata (Indian coral tree).